Reading from the N-terminus, the 106-residue chain is Large ribosomal subunit protein uL24 (106 aa).

The protein belongs to the universal ribosomal protein uL24 family. Part of the 50S ribosomal subunit.

Its function is as follows. One of two assembly initiator proteins, it binds directly to the 5'-end of the 23S rRNA, where it nucleates assembly of the 50S subunit. Functionally, one of the proteins that surrounds the polypeptide exit tunnel on the outside of the subunit. The sequence is that of Large ribosomal subunit protein uL24 from Paracidovorax citrulli (strain AAC00-1) (Acidovorax citrulli).